Here is a 582-residue protein sequence, read N- to C-terminus: Bifunctional lycopene cyclase/phytoene synthase (582 aa).

The segment at 1-261 is lycopene beta-cyclase; that stretch reads MNQNGTRLCY…VVLGLVGCDY (261 aa). Helical transmembrane passes span 34 to 54, 59 to 79, 99 to 121, 142 to 162, 170 to 190, and 242 to 262; these read CTYT…FFTA, KICI…SYLI, IPIE…YCIF, YVVA…LLLG, LILV…YPFL, and ALFF…CDYA. The segment at 268 to 582 is phytoene synthase; that stretch reads YESLSQPASD…LLSALVYRLE (315 aa).

It in the N-terminal section; belongs to the lycopene beta-cyclase family. The protein in the C-terminal section; belongs to the phytoene/squalene synthase family.

The protein localises to the membrane. It carries out the reaction all-trans-lycopene = gamma-carotene. The catalysed reaction is gamma-carotene = all-trans-beta-carotene. It catalyses the reaction 2 (2E,6E,10E)-geranylgeranyl diphosphate = 15-cis-phytoene + 2 diphosphate. Its pathway is carotenoid biosynthesis; beta-carotene biosynthesis. It functions in the pathway carotenoid biosynthesis; phytoene biosynthesis; all-trans-phytoene from geranylgeranyl diphosphate: step 1/1. Functionally, bifunctional enzyme that catalyzes the reactions from geranylgeranyl diphosphate to phytoene (phytoene synthase) and lycopene to beta-carotene via the intermediate gamma-carotene (lycopene cyclase). The protein is Bifunctional lycopene cyclase/phytoene synthase of Aspergillus niger (strain ATCC MYA-4892 / CBS 513.88 / FGSC A1513).